The following is a 178-amino-acid chain: CASP-like protein 4D1 (178 aa).

The Cytoplasmic segment spans residues Met1–Arg14. Residues Thr15–Ile35 traverse the membrane as a helical segment. At Ser36 to Arg60 the chain is on the extracellular side. The helical transmembrane segment at Tyr61 to Ile81 threads the bilayer. At Ser82 to Ala149 the chain is on the cytoplasmic side. Residues Ser150–Leu170 traverse the membrane as a helical segment. Topologically, residues Ser171–Ser178 are extracellular.

The protein belongs to the Casparian strip membrane proteins (CASP) family. Homodimer and heterodimers.

It is found in the cell membrane. This Arabidopsis lyrata subsp. lyrata (Lyre-leaved rock-cress) protein is CASP-like protein 4D1.